Consider the following 377-residue polypeptide: S-adenosylmethionine decarboxylase proenzyme 2 (377 aa).

Active-site residues include E24 and E27. S84 serves as the catalytic Schiff-base intermediate with substrate; via pyruvic acid. Residue S84 is modified to Pyruvic acid (Ser); by autocatalysis. Catalysis depends on C98, which acts as the Proton donor; for catalytic activity. Residues S246 and H259 each act as proton acceptor; for processing activity in the active site.

This sequence belongs to the eukaryotic AdoMetDC family. Pyruvate is required as a cofactor. Post-translationally, is synthesized initially as an inactive proenzyme. Formation of the active enzyme involves a self-maturation process in which the active site pyruvoyl group is generated from an internal serine residue via an autocatalytic post-translational modification. Two non-identical subunits are generated from the proenzyme in this reaction, and the pyruvate is formed at the N-terminus of the alpha chain, which is derived from the carboxyl end of the proenzyme. The post-translation cleavage follows an unusual pathway, termed non-hydrolytic serinolysis, in which the side chain hydroxyl group of the serine supplies its oxygen atom to form the C-terminus of the beta chain, while the remainder of the serine residue undergoes an oxidative deamination to produce ammonia and the pyruvoyl group blocking the N-terminus of the alpha chain.

The catalysed reaction is S-adenosyl-L-methionine + H(+) = S-adenosyl 3-(methylsulfanyl)propylamine + CO2. The protein operates within amine and polyamine biosynthesis; S-adenosylmethioninamine biosynthesis; S-adenosylmethioninamine from S-adenosyl-L-methionine: step 1/1. The chain is S-adenosylmethionine decarboxylase proenzyme 2 (SAMDC2) from Dianthus caryophyllus (Carnation).